A 431-amino-acid polypeptide reads, in one-letter code: 3-phosphoshikimate 1-carboxyvinyltransferase (431 aa).

3-phosphoshikimate is bound by residues lysine 26, serine 27, and arginine 31. A phosphoenolpyruvate-binding site is contributed by lysine 26. Phosphoenolpyruvate-binding residues include glycine 100 and arginine 129. 3-phosphoshikimate contacts are provided by serine 175, serine 176, glutamine 177, aspartate 308, and glutamine 335. Glutamine 177 is a binding site for phosphoenolpyruvate. Aspartate 308 functions as the Proton acceptor in the catalytic mechanism. Residues arginine 339, arginine 381, and lysine 412 each coordinate phosphoenolpyruvate.

This sequence belongs to the EPSP synthase family. As to quaternary structure, monomer.

Its subcellular location is the cytoplasm. The catalysed reaction is 3-phosphoshikimate + phosphoenolpyruvate = 5-O-(1-carboxyvinyl)-3-phosphoshikimate + phosphate. It participates in metabolic intermediate biosynthesis; chorismate biosynthesis; chorismate from D-erythrose 4-phosphate and phosphoenolpyruvate: step 6/7. Functionally, catalyzes the transfer of the enolpyruvyl moiety of phosphoenolpyruvate (PEP) to the 5-hydroxyl of shikimate-3-phosphate (S3P) to produce enolpyruvyl shikimate-3-phosphate and inorganic phosphate. In Opitutus terrae (strain DSM 11246 / JCM 15787 / PB90-1), this protein is 3-phosphoshikimate 1-carboxyvinyltransferase.